The sequence spans 73 residues: Disintegrin trigramin-gamma (73 aa).

The 73-residue stretch at 1–73 (EAGEDCDCGS…AGCPRNPLHA (73 aa)) folds into the Disintegrin domain. 6 disulfides stabilise this stretch: Cys-6/Cys-21, Cys-8/Cys-16, Cys-15/Cys-38, Cys-29/Cys-35, Cys-34/Cys-59, and Cys-47/Cys-66. The Cell attachment site motif lies at 51 to 53 (RGD).

Belongs to the venom metalloproteinase (M12B) family. P-II subfamily. P-IIa sub-subfamily. Monomer (disintegrin). In terms of tissue distribution, expressed by the venom gland.

The protein localises to the secreted. Functionally, inhibits fibrinogen interaction with platelets. Acts by binding to alpha-IIb/beta-3 (ITGA2B/ITGB3) on the platelet surface and inhibits aggregation induced by ADP, thrombin, platelet-activating factor and collagen. In Craspedocephalus gramineus (Bamboo pit viper), this protein is Disintegrin trigramin-gamma.